Reading from the N-terminus, the 401-residue chain is NADH-quinone oxidoreductase subunit D (401 aa).

This sequence belongs to the complex I 49 kDa subunit family. NDH-1 is composed of 15 different subunits. Subunits NuoB, C, D, E, F, and G constitute the peripheral sector of the complex.

The protein localises to the cell membrane. It catalyses the reaction a quinone + NADH + 5 H(+)(in) = a quinol + NAD(+) + 4 H(+)(out). Functionally, NDH-1 shuttles electrons from NADH, via FMN and iron-sulfur (Fe-S) centers, to quinones in the respiratory chain. The immediate electron acceptor for the enzyme in this species is believed to be a menaquinone. Couples the redox reaction to proton translocation (for every two electrons transferred, four hydrogen ions are translocated across the cytoplasmic membrane), and thus conserves the redox energy in a proton gradient. This is NADH-quinone oxidoreductase subunit D from Deinococcus radiodurans (strain ATCC 13939 / DSM 20539 / JCM 16871 / CCUG 27074 / LMG 4051 / NBRC 15346 / NCIMB 9279 / VKM B-1422 / R1).